We begin with the raw amino-acid sequence, 286 residues long: Cytotoxin (286 aa).

Positions 267–286 (TFYNYASLVPDLETRVRSAE) are excised as a propeptide.

It belongs to the aerolysin family.

The protein resides in the secreted. Cytotoxin is thought to form hydrophilic pores in cell membranes. This is Cytotoxin (ctx) from Pseudomonas aeruginosa.